Reading from the N-terminus, the 588-residue chain is Aspartate--tRNA ligase (588 aa).

Glu172 serves as a coordination point for L-aspartate. The segment at 196–199 (QLFK) is aspartate. L-aspartate is bound at residue Arg218. ATP-binding positions include 218–220 (RDE) and Gln227. His449 lines the L-aspartate pocket. Glu483 lines the ATP pocket. Arg490 contributes to the L-aspartate binding site. Residue 535-538 (GLDR) participates in ATP binding.

This sequence belongs to the class-II aminoacyl-tRNA synthetase family. Type 1 subfamily. In terms of assembly, homodimer.

Its subcellular location is the cytoplasm. The enzyme catalyses tRNA(Asp) + L-aspartate + ATP = L-aspartyl-tRNA(Asp) + AMP + diphosphate. Functionally, catalyzes the attachment of L-aspartate to tRNA(Asp) in a two-step reaction: L-aspartate is first activated by ATP to form Asp-AMP and then transferred to the acceptor end of tRNA(Asp). In Histophilus somni (strain 2336) (Haemophilus somnus), this protein is Aspartate--tRNA ligase.